Here is a 264-residue protein sequence, read N- to C-terminus: 5'-nucleotidase SurE (264 aa).

The a divalent metal cation site is built by aspartate 8, aspartate 9, serine 41, and asparagine 98.

The protein belongs to the SurE nucleotidase family. The cofactor is a divalent metal cation.

It localises to the cytoplasm. The catalysed reaction is a ribonucleoside 5'-phosphate + H2O = a ribonucleoside + phosphate. Its function is as follows. Nucleotidase that shows phosphatase activity on nucleoside 5'-monophosphates. The polypeptide is 5'-nucleotidase SurE (Carboxydothermus hydrogenoformans (strain ATCC BAA-161 / DSM 6008 / Z-2901)).